Consider the following 257-residue polypeptide: Flap endonuclease Xni (257 aa).

D109 contributes to the Mg(2+) binding site. The region spanning 165 to 255 is the 5'-3' exonuclease domain; sequence LKPEQLADYW…FNLQDIRYEK (91 aa). Residues L176, A177, I187, and I190 each contribute to the K(+) site. An interaction with DNA region spans residues 189-194; sequence GIGPKA.

The protein belongs to the Xni family. Requires Mg(2+) as cofactor. K(+) serves as cofactor.

Functionally, has flap endonuclease activity. During DNA replication, flap endonucleases cleave the 5'-overhanging flap structure that is generated by displacement synthesis when DNA polymerase encounters the 5'-end of a downstream Okazaki fragment. This chain is Flap endonuclease Xni, found in Aliivibrio salmonicida (strain LFI1238) (Vibrio salmonicida (strain LFI1238)).